The sequence spans 244 residues: MSVLDLNALNDLPKVDRVLALAETNAELEKLVAEERVAWSLENLPGEYVLSSSFGIQAAVSLHLVNQIRPDIPVILTDTGYLFPETYQFIDALTDKLKLNLKVYRATESAAWQEARYGKLWEQGVEGIEKYNEINKVEPMNRALQDLNAQTWFAGLRREQSGSRTSLPVLAIQRGVFKVLPIIDWDNRTVYQYLQKHGLKYHPLWHQGYLSVGDTHTTRKWEPGMAEEETRFFGLKRECGLHEG.

Residue Cys-239 is the Nucleophile; cysteine thiosulfonate intermediate of the active site.

The protein belongs to the PAPS reductase family. CysH subfamily.

It localises to the cytoplasm. It carries out the reaction [thioredoxin]-disulfide + sulfite + adenosine 3',5'-bisphosphate + 2 H(+) = [thioredoxin]-dithiol + 3'-phosphoadenylyl sulfate. Its pathway is sulfur metabolism; hydrogen sulfide biosynthesis; sulfite from sulfate: step 3/3. Catalyzes the formation of sulfite from phosphoadenosine 5'-phosphosulfate (PAPS) using thioredoxin as an electron donor. In Salmonella arizonae (strain ATCC BAA-731 / CDC346-86 / RSK2980), this protein is Phosphoadenosine 5'-phosphosulfate reductase.